A 732-amino-acid chain; its full sequence is Eukaryotic translation initiation factor 3 subunit B (732 aa).

The segment at 1 to 94 (MTTLESLKIE…LFIEMESVSA (94 aa)) is sufficient for interaction with HCR1 and TIF32. The interval 1 to 219 (MTTLESLKIE…GVTSWGGPNF (219 aa)) is sufficient for interaction with PIC8. Residues 37-120 (NFLVVDGAPV…HRLLVNSLND (84 aa)) enclose the RRM domain. WD repeat units follow at residues 185–224 (ARKN…RLKR), 237–280 (PTEK…LMKT), 439–481 (EMKD…KFFA), and 507–554 (VDQQ…KTLN).

Belongs to the eIF-3 subunit B family. In terms of assembly, component of the eukaryotic translation initiation factor 3 (eIF-3) complex.

The protein resides in the cytoplasm. Functionally, RNA-binding component of the eukaryotic translation initiation factor 3 (eIF-3) complex, which is involved in protein synthesis of a specialized repertoire of mRNAs and, together with other initiation factors, stimulates binding of mRNA and methionyl-tRNAi to the 40S ribosome. The eIF-3 complex specifically targets and initiates translation of a subset of mRNAs involved in cell proliferation. This chain is Eukaryotic translation initiation factor 3 subunit B, found in Kluyveromyces lactis (strain ATCC 8585 / CBS 2359 / DSM 70799 / NBRC 1267 / NRRL Y-1140 / WM37) (Yeast).